A 115-amino-acid chain; its full sequence is uncharacterized protein (115 aa).

An N-terminal signal peptide occupies residues 1 to 26 (MNFKKTVVSALSISALALSVSGVASA). The 79-residue stretch at 36–114 (VKNISISPTH…AVFGKVYVTV (79 aa)) folds into the BIG2 domain.

This is an uncharacterized protein from Bacillus subtilis (strain 168).